A 309-amino-acid polypeptide reads, in one-letter code: Foldase protein PrsA 2 (309 aa).

Residues 1-22 (MKQMNKLITGVVTLATVVTLSA) form the signal peptide. Cys-23 is lipidated: N-palmitoyl cysteine. A lipid anchor (S-diacylglycerol cysteine) is attached at Cys-23. One can recognise a PpiC domain in the interval 146–241 (TPTMTAEIMQ…RTYHIIKVTK (96 aa)).

This sequence belongs to the PrsA family.

The protein resides in the cell membrane. The enzyme catalyses [protein]-peptidylproline (omega=180) = [protein]-peptidylproline (omega=0). Functionally, plays a major role in protein secretion by helping the post-translocational extracellular folding of several secreted proteins. This is Foldase protein PrsA 2 from Streptococcus pyogenes serotype M6 (strain ATCC BAA-946 / MGAS10394).